The sequence spans 804 residues: Leucine--tRNA ligase (804 aa).

The 'HIGH' region signature appears at 40–51; the sequence is PYPSGQGLHVGH. The 'KMSKS' region signature appears at 576-580; sequence KMSKS. Lysine 579 contacts ATP.

It belongs to the class-I aminoacyl-tRNA synthetase family.

Its subcellular location is the cytoplasm. The enzyme catalyses tRNA(Leu) + L-leucine + ATP = L-leucyl-tRNA(Leu) + AMP + diphosphate. The polypeptide is Leucine--tRNA ligase (Enterococcus faecalis (strain ATCC 700802 / V583)).